The chain runs to 363 residues: 3-dehydroquinate synthase (363 aa).

NAD(+) is bound by residues 107–111, 131–132, Lys-144, and Lys-153; these read GVIGD and TT. Residues Glu-186, His-251, and His-268 each coordinate Zn(2+).

It belongs to the sugar phosphate cyclases superfamily. Dehydroquinate synthase family. NAD(+) is required as a cofactor. The cofactor is Co(2+). It depends on Zn(2+) as a cofactor.

It is found in the cytoplasm. It carries out the reaction 7-phospho-2-dehydro-3-deoxy-D-arabino-heptonate = 3-dehydroquinate + phosphate. Its pathway is metabolic intermediate biosynthesis; chorismate biosynthesis; chorismate from D-erythrose 4-phosphate and phosphoenolpyruvate: step 2/7. Functionally, catalyzes the conversion of 3-deoxy-D-arabino-heptulosonate 7-phosphate (DAHP) to dehydroquinate (DHQ). This chain is 3-dehydroquinate synthase, found in Nostoc sp. (strain PCC 7120 / SAG 25.82 / UTEX 2576).